The primary structure comprises 498 residues: ATP synthase subunit beta, chloroplastic (498 aa).

172-179 contacts ATP; it reads GGAGVGKT.

It belongs to the ATPase alpha/beta chains family. As to quaternary structure, F-type ATPases have 2 components, CF(1) - the catalytic core - and CF(0) - the membrane proton channel. CF(1) has five subunits: alpha(3), beta(3), gamma(1), delta(1), epsilon(1). CF(0) has four main subunits: a(1), b(1), b'(1) and c(9-12).

The protein localises to the plastid. Its subcellular location is the chloroplast thylakoid membrane. It carries out the reaction ATP + H2O + 4 H(+)(in) = ADP + phosphate + 5 H(+)(out). Functionally, produces ATP from ADP in the presence of a proton gradient across the membrane. The catalytic sites are hosted primarily by the beta subunits. The chain is ATP synthase subunit beta, chloroplastic from Aspidistra elatior (Cast-iron plant).